The chain runs to 211 residues: Pyridoxine/pyridoxamine 5'-phosphate oxidase (211 aa).

Substrate contacts are provided by residues 8–11 (RKNY) and Lys66. Residues 61 to 66 (RIVLLK), 76 to 77 (FT), Lys83, and Gln105 contribute to the FMN site. Substrate is bound by residues Tyr123, Arg127, and Ser131. Residues 140–141 (QS) and Trp184 contribute to the FMN site. Residue 190-192 (RLH) coordinates substrate. An FMN-binding site is contributed by Arg194.

It belongs to the pyridoxamine 5'-phosphate oxidase family. In terms of assembly, homodimer. FMN serves as cofactor.

It carries out the reaction pyridoxamine 5'-phosphate + O2 + H2O = pyridoxal 5'-phosphate + H2O2 + NH4(+). The enzyme catalyses pyridoxine 5'-phosphate + O2 = pyridoxal 5'-phosphate + H2O2. It functions in the pathway cofactor metabolism; pyridoxal 5'-phosphate salvage; pyridoxal 5'-phosphate from pyridoxamine 5'-phosphate: step 1/1. Its pathway is cofactor metabolism; pyridoxal 5'-phosphate salvage; pyridoxal 5'-phosphate from pyridoxine 5'-phosphate: step 1/1. Catalyzes the oxidation of either pyridoxine 5'-phosphate (PNP) or pyridoxamine 5'-phosphate (PMP) into pyridoxal 5'-phosphate (PLP). In Polynucleobacter asymbioticus (strain DSM 18221 / CIP 109841 / QLW-P1DMWA-1) (Polynucleobacter necessarius subsp. asymbioticus), this protein is Pyridoxine/pyridoxamine 5'-phosphate oxidase.